The chain runs to 345 residues: MGRSPCCDKAGLKKGPWTPEEDQKLLAYIEEHGHGSWRSLPEKAGLQRCGKSCRLRWTNYLRPDIKRGKFTVQEEQTIIQLHALLGNRWSAIATHLPKRTDNEIKNYWNTHLKKRLIKMGIDPVTHKHKNETLSSSTGQSKNAATLSHMAQWESARLEAEARLARESKLLHLQHYQNNNNLNKSAAPQQHCFTQKTSTNWTKPNQGNGDQQLESPTSTVTFSENLLMPLGIPTDSSRNRNNNNNESSAMIELAVSSSTSSDVSLVKEHEHDWIRQINCGSGGIGEGFTSLLIGDSVGRGLPTGKNEATAGVGNESEYNYYEDNKNYWNSILNLVDSSPSDSATMF.

2 HTH myb-type domains span residues 9–61 and 62–116; these read KAGL…TNYL and RPDI…KKRL. 2 DNA-binding regions (H-T-H motif) span residues 37 to 61 and 89 to 112; these read WRSL…TNYL and WSAI…NTHL.

Expressed in trichomes, stems, carpels, petals and stamens.

It is found in the nucleus. In terms of biological role, functions as a repressor of epidermal cell outgrowth and negatively regulate trichome branch formation. Acts both as a positive and a negative regulator of cellular outgrowth. Promotes both trichome expansion and branch formation. Coordinately with WIN1/SHN1, participates in the regulation of cuticle biosynthesis and wax accumulation in reproductive organs and trichomes. Functions in cuticle nanoridge formation in petals and stamens, and in morphogenesis of petal conical cells and trichomes. May play a role in the regulation of cuticle formation in vegetative organs. In Arabidopsis thaliana (Mouse-ear cress), this protein is Transcription factor MYB106.